A 240-amino-acid chain; its full sequence is MMNPSKRKLLYSGKVKSMYETDEPGFLIAEFRDDTTAFDGEKHEKLARKGVINNQINAHIMQALKDAGILTHFESVLSPNESLVRRLKMIPLECVVRNIAAGSLCRRLGIESGLRLNPPLYELFLKNDALHDPMINENHALSFGWATQAQLDRMKELSFKINNVLFALFSNVNLILVDAKYEFGVSNDEIYLGDEISPDSCRIWDAKTKEPLDKDRFRKDMGRVVESYEEIAHRFQIKLS.

The protein belongs to the SAICAR synthetase family.

It carries out the reaction 5-amino-1-(5-phospho-D-ribosyl)imidazole-4-carboxylate + L-aspartate + ATP = (2S)-2-[5-amino-1-(5-phospho-beta-D-ribosyl)imidazole-4-carboxamido]succinate + ADP + phosphate + 2 H(+). It participates in purine metabolism; IMP biosynthesis via de novo pathway; 5-amino-1-(5-phospho-D-ribosyl)imidazole-4-carboxamide from 5-amino-1-(5-phospho-D-ribosyl)imidazole-4-carboxylate: step 1/2. The chain is Phosphoribosylaminoimidazole-succinocarboxamide synthase from Coxiella burnetii (strain RSA 493 / Nine Mile phase I).